The chain runs to 126 residues: Fluoride-specific ion channel FluC 2 (126 aa).

The next 4 membrane-spanning stretches (helical) occupy residues 11 to 31, 36 to 56, 69 to 89, and 93 to 113; these read VLLI…ICEH, LGIL…MYDA, AFGT…VQSF, and FLPA…GVFF. Residues G76 and T79 each coordinate Na(+).

Belongs to the fluoride channel Fluc/FEX (TC 1.A.43) family.

The protein localises to the cell membrane. It catalyses the reaction fluoride(in) = fluoride(out). Its activity is regulated as follows. Na(+) is not transported, but it plays an essential structural role and its presence is essential for fluoride channel function. Its function is as follows. Fluoride-specific ion channel. Important for reducing fluoride concentration in the cell, thus reducing its toxicity. This is Fluoride-specific ion channel FluC 2 from Methanosarcina mazei (strain ATCC BAA-159 / DSM 3647 / Goe1 / Go1 / JCM 11833 / OCM 88) (Methanosarcina frisia).